The following is a 357-amino-acid chain: NADH-quinone oxidoreductase subunit H (357 aa).

A run of 8 helical transmembrane segments spans residues 20–40 (WLVL…ILCV), 92–112 (ILFV…WAVV), 127–147 (LLYV…AGWA), 165–185 (VSYE…SGSL), 206–226 (FLSW…ISAV), 254–274 (MAFA…SCMA), 294–314 (IPGW…FVWF), and 329–349 (LGWK…AIWM).

Belongs to the complex I subunit 1 family. NDH-1 is composed of 14 different subunits. Subunits NuoA, H, J, K, L, M, N constitute the membrane sector of the complex.

The protein resides in the cell inner membrane. It catalyses the reaction a quinone + NADH + 5 H(+)(in) = a quinol + NAD(+) + 4 H(+)(out). NDH-1 shuttles electrons from NADH, via FMN and iron-sulfur (Fe-S) centers, to quinones in the respiratory chain. The immediate electron acceptor for the enzyme in this species is believed to be ubiquinone. Couples the redox reaction to proton translocation (for every two electrons transferred, four hydrogen ions are translocated across the cytoplasmic membrane), and thus conserves the redox energy in a proton gradient. This subunit may bind ubiquinone. The polypeptide is NADH-quinone oxidoreductase subunit H (Bordetella petrii (strain ATCC BAA-461 / DSM 12804 / CCUG 43448)).